Consider the following 104-residue polypeptide: Phosphoribosyl-ATP pyrophosphatase (104 aa).

The protein belongs to the PRA-PH family.

The protein localises to the cytoplasm. The enzyme catalyses 1-(5-phospho-beta-D-ribosyl)-ATP + H2O = 1-(5-phospho-beta-D-ribosyl)-5'-AMP + diphosphate + H(+). Its pathway is amino-acid biosynthesis; L-histidine biosynthesis; L-histidine from 5-phospho-alpha-D-ribose 1-diphosphate: step 2/9. This Rhizobium rhizogenes (strain K84 / ATCC BAA-868) (Agrobacterium radiobacter) protein is Phosphoribosyl-ATP pyrophosphatase.